The primary structure comprises 426 residues: Cephalotocin receptor 2 (426 aa).

Residues 1–51 (MYQAMEVESTSPSGFFLDFYTQSTIPTTDFLNNTNSSHPIRDEKLVKIEIA) are Extracellular-facing. N-linked (GlcNAc...) asparagine glycosylation is found at asparagine 32 and asparagine 35. A helical transmembrane segment spans residues 52-72 (VLGTCFTLAIINNLCVLLVLL). The Cytoplasmic portion of the chain corresponds to 73–84 (WRRKKVRRMQMF). The chain crosses the membrane as a helical span at residues 85–105 (ILHLSIADLIVAFFNILPQLI). At 106 to 120 (WDITFRFMAGDAMCR) the chain is on the extracellular side. A disulfide bridge links cysteine 119 with cysteine 198. The helical transmembrane segment at 121-141 (FIKYAQMFSLYLSTYILIMTA) threads the bilayer. Residues 142 to 165 (VDRYRAICHPLSNQTWTPCMVYCK) lie on the Cytoplasmic side of the membrane. Residues 166–186 (IFIAYAIATIFSIPQAILFQM) traverse the membrane as a helical segment. Residues 187 to 208 (QEVNEGSGIYDCWVHFEPAWVL) lie on the Extracellular side of the membrane. Residues 209–229 (TAYALYIFFALYLIPILILFF) traverse the membrane as a helical segment. Topologically, residues 230 to 288 (TYGSICYTIWAKYRHAIKTKKDANTRYPQRRKKKGVILRTHSVHGFSKAKLNSVKLTFA) are cytoplasmic. A helical membrane pass occupies residues 289–309 (VIVTYIICWSPFFVSQIWWLF). Residues 310-319 (DETVVGNAGV) are Extracellular-facing. A helical membrane pass occupies residues 320 to 340 (VVILLMACLNSCTNPWIYLIF). The Cytoplasmic segment spans residues 341–426 (NRNYISNVLP…DQFIYSDKTT (86 aa)). The segment at 373–426 (GSVRRDSRKTSDPKRISESRRISDARRISGKTQKNNSSSPRKTSDQFIYSDKTT) is disordered. Residues 375 to 399 (VRRDSRKTSDPKRISESRRISDARR) are compositionally biased toward basic and acidic residues. Polar residues predominate over residues 402–426 (GKTQKNNSSSPRKTSDQFIYSDKTT).

This sequence belongs to the G-protein coupled receptor 1 family. Vasopressin/oxytocin receptor subfamily. Present in various peripheral tissues with highest expression in branchia and vas deferens. Very low expression detected in nervous system.

It localises to the cell membrane. In terms of biological role, acts as a receptor for cephalotocin. This chain is Cephalotocin receptor 2, found in Octopus vulgaris (Common octopus).